A 324-amino-acid chain; its full sequence is MAGTQDAPLEEILWRSPSHVQMMGGFLHSNNILFYFAESPFFDATSNNASLAIQANYNETFRHFVETREAFEGRLKTMQGLEFVVSYDPLQAAAQSNGQFAHEPSNIWVIHKQTRRKRPGLEDEVEVLSTFFVVGDCIYMAPSVASVVGNRILSAVTSLTNLMKTAASLPNFTPAHGHTYMPPVSKSTDTAQPSAQPSKENTPMPDADSTKASLVGGAQSTNAGSVFQHTRTLAESFSLLTQYGDEFMDENPLVGEPGSFIMSRNNEGAASKQPPVGTTRPGTVPVRAGTPQVKVDTPGKTPDKGLTPGPDENKLRKKKGKSGV.

2 disordered regions span residues 172 to 217 (FTPA…LVGG) and 254 to 324 (VGEP…KSGV). Positions 185–201 (SKSTDTAQPSAQPSKEN) are enriched in polar residues. Positions 274 to 287 (PPVGTTRPGTVPVR) are enriched in low complexity. The span at 315–324 (LRKKKGKSGV) shows a compositional bias: basic residues.

Belongs to the Mediator complex subunit 6 family. Component of the Mediator complex.

Its subcellular location is the nucleus. Functionally, component of the Mediator complex, a coactivator involved in the regulated transcription of nearly all RNA polymerase II-dependent genes. Mediator functions as a bridge to convey information from gene-specific regulatory proteins to the basal RNA polymerase II transcription machinery. Mediator is recruited to promoters by direct interactions with regulatory proteins and serves as a scaffold for the assembly of a functional preinitiation complex with RNA polymerase II and the general transcription factors. This chain is Mediator of RNA polymerase II transcription subunit 6 (med6), found in Aspergillus terreus (strain NIH 2624 / FGSC A1156).